Reading from the N-terminus, the 302-residue chain is Troponin T, cardiac muscle isoforms (302 aa).

Acidic residues predominate over residues 1 to 55; it reads MSDSEEVVEEYEQEQEEEYVEEEEEEWLEEDDGQEDQVDEEEEETEETTAEEQED. Disordered regions lie at residues 1-99, 138-230, and 280-302; these read MSDS…GERL, KDRI…RKPL, and SDHQKVKGSKAARGKTMVGGRWK. Serine 2 carries the N-acetylserine modification. At serine 2 the chain carries Phosphoserine; by CK2. Positions 65-79 are enriched in basic and acidic residues; the sequence is EGDREQEPGEGESKP. Positions 82–93 are enriched in pro residues; it reads KPFMPNLVPPKI. Composition is skewed to basic and acidic residues over residues 138–186 and 204–230; these read KDRI…EKEA and KSEKKGGKKQTEREKKKKILSERRKPL.

Belongs to the troponin T family.

In terms of biological role, troponin T is the tropomyosin-binding subunit of troponin, the thin filament regulatory complex which confers calcium-sensitivity to striated muscle actomyosin ATPase activity. The protein is Troponin T, cardiac muscle isoforms (TNNT2) of Gallus gallus (Chicken).